The following is a 111-amino-acid chain: uncharacterized protein (111 aa).

This is an uncharacterized protein from Bacillus subtilis (strain 168).